The primary structure comprises 539 residues: Chaperonin GroEL (539 aa).

Residues 30–33 (TLGP), lysine 51, 87–91 (DGTTT), glycine 415, 479–481 (NAA), and aspartate 495 contribute to the ATP site.

The protein belongs to the chaperonin (HSP60) family. In terms of assembly, forms a cylinder of 14 subunits composed of two heptameric rings stacked back-to-back. Interacts with the co-chaperonin GroES.

It is found in the cytoplasm. It catalyses the reaction ATP + H2O + a folded polypeptide = ADP + phosphate + an unfolded polypeptide.. Its function is as follows. Together with its co-chaperonin GroES, plays an essential role in assisting protein folding. The GroEL-GroES system forms a nano-cage that allows encapsulation of the non-native substrate proteins and provides a physical environment optimized to promote and accelerate protein folding. The sequence is that of Chaperonin GroEL from Enterobacter asburiae.